The sequence spans 335 residues: RNA polymerase sigma factor RpoS (335 aa).

The interval 57-90 (DATQMYLSEIGFSPLLTAEEEVLYARRALRGDEA) is sigma-70 factor domain-1. The interval 95 to 165 (MIESNLRLVV…ERALMNQTRT (71 aa)) is sigma-70 factor domain-2. An Interaction with polymerase core subunit RpoC motif is present at residues 119–122 (DLIE). Residues 175 to 250 (ELNIYLRTAR…DSHNADPEFS (76 aa)) form a sigma-70 factor domain-3 region. Positions 263-316 (WLDELNPKQKEVLARRFGLLGYEPSTLEEVGREINLTRERVRQIQVEGLRRLRE) are sigma-70 factor domain-4. Residues 289–308 (LEEVGREINLTRERVRQIQV) constitute a DNA-binding region (H-T-H motif).

The protein belongs to the sigma-70 factor family. RpoS subfamily. In terms of assembly, interacts with the RNA polymerase core enzyme.

Its subcellular location is the cytoplasm. Its function is as follows. Sigma factors are initiation factors that promote the attachment of RNA polymerase to specific initiation sites and are then released. This sigma factor is the master transcriptional regulator of the stationary phase and the general stress response. May be required for the persistence of V.cholerae in aquatic habitats. The polypeptide is RNA polymerase sigma factor RpoS (Vibrio cholerae serotype O1 (strain ATCC 39315 / El Tor Inaba N16961)).